We begin with the raw amino-acid sequence, 62 residues long: Small ribosomal subunit protein bS21 (62 aa).

Residues 43 to 52 (VKKKLKSEAA) show a composition bias toward basic and acidic residues. The interval 43-62 (VKKKLKSEAARKRKAKKKRF) is disordered. A compositionally biased stretch (basic residues) spans 53–62 (RKRKAKKKRF).

Belongs to the bacterial ribosomal protein bS21 family.

The polypeptide is Small ribosomal subunit protein bS21 (Levilactobacillus brevis (strain ATCC 367 / BCRC 12310 / CIP 105137 / JCM 1170 / LMG 11437 / NCIMB 947 / NCTC 947) (Lactobacillus brevis)).